The following is a 92-amino-acid chain: Small ribosomal subunit protein bS20 (92 aa).

Residues 1 to 28 (MANTASAEKRNRQAQKRRARNVQVRTGV) are disordered.

This sequence belongs to the bacterial ribosomal protein bS20 family.

In terms of biological role, binds directly to 16S ribosomal RNA. The polypeptide is Small ribosomal subunit protein bS20 (Anaeromyxobacter dehalogenans (strain 2CP-C)).